Consider the following 262-residue polypeptide: Small ribosomal subunit protein uS2 (262 aa).

It belongs to the universal ribosomal protein uS2 family.

The sequence is that of Small ribosomal subunit protein uS2 from Borreliella afzelii (strain PKo) (Borrelia afzelii).